The sequence spans 206 residues: uncharacterized protein (206 aa).

Helical transmembrane passes span 9–29, 47–67, 74–94, and 150–170; these read ILSLFGAMLILAALPSLSVLT, LGVVLGDIIFILIALWGLAFL, FFVILKYISGIYLSWLGINTI, and IAVIILTAILTVGGVKIFYAF.

It belongs to the Rht family.

It localises to the cell membrane. This is an uncharacterized protein from Synechocystis sp. (strain ATCC 27184 / PCC 6803 / Kazusa).